The primary structure comprises 231 residues: MSLYDRDYSRSKEFENTRSSELSIFIKQTYQLFAASLLAATVGAYVGIFALASFFIQSQVTFWILFAVEIGLLFALQWKKREAPLNLVLLFGFTFCSGLTLTPLLISVLALPAGGIIIAQAFALTTVAFAGLSVFAMNTKKDFTVMGKALFIVLIVIVAASLLNLFFQSSIVNLAISAVAAILFSFYILYDTQNIIRGNYETPIEGAVALYLDFVNLFVSLLNILRSFNSR.

5 helical membrane-spanning segments follow: residues 36-56 (SLLA…SFFI), 58-78 (SQVT…ALQW), 83-103 (APLN…TLTP), 143-163 (FTVM…ASLL), and 170-190 (SIVN…YILY).

This sequence belongs to the BI1 family.

Its subcellular location is the cell membrane. This is an uncharacterized protein from Campylobacter jejuni subsp. jejuni serotype O:2 (strain ATCC 700819 / NCTC 11168).